Reading from the N-terminus, the 648-residue chain is Serine/threonine-protein phosphatase 1 regulatory subunit PIG1 (648 aa).

The segment covering 20-51 (STSSFVSSTTSNSFSPLEDSTSASSSTSSSSS) has biased composition (low complexity). The segment at 20–52 (STSSFVSSTTSNSFSPLEDSTSASSSTSSSSSG) is disordered. The CBM21 domain maps to 201 to 331 (HSLELSDPVS…NNDYKNYEIT (131 aa)). A compositionally biased stretch (polar residues) spans 593 to 609 (RESSSPEISPLNTTTSL). Residues 593 to 629 (RESSSPEISPLNTTTSLPFFPGDNMSDSSGEYEERTS) are disordered.

Regulates the activity of glycogen synthase. It is most probably a regulatory subunit for protein phosphatase type 1. The sequence is that of Serine/threonine-protein phosphatase 1 regulatory subunit PIG1 (PIG1) from Saccharomyces cerevisiae (strain ATCC 204508 / S288c) (Baker's yeast).